The primary structure comprises 873 residues: Bifunctional heparan sulfate N-deacetylase/N-sulfotransferase 3 (873 aa).

Over 1 to 13 (MSFIMKLHRHFQR) the chain is Cytoplasmic. A helical; Signal-anchor for type II membrane protein membrane pass occupies residues 14–34 (TVILLATFCMVSIIISAYYLY). Topologically, residues 35-873 (SGYKQENELS…WLRQELQKVR (839 aa)) are lumenal. The segment at 36-589 (GYKQENELSE…KRHRDIWSKE (554 aa)) is heparan sulfate N-deacetylase 3. N-linked (GlcNAc...) asparagine glycans are attached at residues N146, N226, N342, and N392. Positions 590-873 (KTCDRLPKFL…WLRQELQKVR (284 aa)) are heparan sulfate N-sulfotransferase 3. Catalysis depends on K605, which acts as the For sulfotransferase activity. 605–609 (KTGTT) serves as a coordination point for 3'-phosphoadenylyl sulfate. Residue N658 is glycosylated (N-linked (GlcNAc...) asparagine). S703 provides a ligand contact to 3'-phosphoadenylyl sulfate. N794 is a glycosylation site (N-linked (GlcNAc...) asparagine). Cysteines 809 and 819 form a disulfide. Residue 824-828 (KGRKY) coordinates 3'-phosphoadenylyl sulfate.

Belongs to the sulfotransferase 1 family. NDST subfamily. In terms of assembly, monomer. As to expression, expressed in brain, kidney, liver, fetal and adult lung, adult pancreas, placenta, fetal spleen and fetal thymus. Not detected in adult/ fetal heart and skeletal muscle.

Its subcellular location is the golgi apparatus membrane. It catalyses the reaction alpha-D-glucosaminyl-[heparan sulfate](n) + 3'-phosphoadenylyl sulfate = N-sulfo-alpha-D-glucosaminyl-[heparan sulfate](n) + adenosine 3',5'-bisphosphate + 2 H(+). It functions in the pathway glycan metabolism; heparan sulfate biosynthesis. The protein operates within glycan metabolism; heparin biosynthesis. Functionally, essential bifunctional enzyme that catalyzes both the N-deacetylation and the N-sulfation of glucosamine (GlcNAc) of the glycosaminoglycan in heparan sulfate. Modifies the GlcNAc-GlcA disaccharide repeating sugar backbone to make N-sulfated heparosan, a prerequisite substrate for later modifications in heparin biosynthesis. Has high deacetylase activity but low sulfotransferase activity. In Homo sapiens (Human), this protein is Bifunctional heparan sulfate N-deacetylase/N-sulfotransferase 3.